The chain runs to 566 residues: 4-coumarate--CoA ligase-like 6 (566 aa).

The interval 1-21 is disordered; it reads MAATHLHIPPNPKTQTSHQNP. Residues Ser212, Ser213, Gly214, Thr215, Thr216, and Lys220 each coordinate ATP. A (E)-4-coumaroyl-AMP-binding site is contributed by Tyr263. Arg284 is a CoA binding site. The SBD1 stretch occupies residues 286 to 356; it reads DASDVVNVIE…QTLPHVDLIQ (71 aa). (E)-4-coumaroyl-AMP is bound by residues Ala334, Gln356, Gly357, and Thr361. Residues Gln356, Gly357, Thr361, Asp442, and Arg457 each contribute to the ATP site. Positions 357–421 are SBD2; the sequence is GYGMTESTAV…IQGPGVMKGY (65 aa). Lys459 and Lys463 together coordinate (E)-4-coumaroyl-AMP. CoA is bound by residues Lys465 and Gly466. ATP is bound at residue Lys548. A Microbody targeting signal motif is present at residues 564-566; it reads SRL.

It belongs to the ATP-dependent AMP-binding enzyme family. The cofactor is Mg(2+). As to expression, expressed at very low level in leaves.

The protein resides in the peroxisome. It catalyses the reaction (E)-4-coumarate + ATP + CoA = (E)-4-coumaroyl-CoA + AMP + diphosphate. The catalysed reaction is (E)-4-coumarate + ATP + H(+) = (E)-4-coumaroyl-AMP + diphosphate. The enzyme catalyses (E)-4-coumaroyl-AMP + CoA = (E)-4-coumaroyl-CoA + AMP + H(+). It carries out the reaction (E)-ferulate + ATP + CoA = (E)-feruloyl-CoA + AMP + diphosphate. It catalyses the reaction (E)-ferulate + ATP + H(+) = (E)-feruloyl-AMP + diphosphate. The catalysed reaction is (E)-feruloyl-AMP + CoA = (E)-feruloyl-CoA + AMP + H(+). The enzyme catalyses (E)-caffeate + ATP + CoA = (E)-caffeoyl-CoA + AMP + diphosphate. It carries out the reaction (E)-caffeate + ATP + H(+) = (E)-caffeoyl-AMP + diphosphate. It catalyses the reaction (E)-caffeoyl-AMP + CoA = (E)-caffeoyl-CoA + AMP + H(+). The catalysed reaction is (E)-cinnamate + ATP + CoA = (E)-cinnamoyl-CoA + AMP + diphosphate. The enzyme catalyses 4-hydroxybenzoate + ATP + CoA = 4-hydroxybenzoyl-CoA + AMP + diphosphate. It carries out the reaction tetradecanoate + ATP + CoA = tetradecanoyl-CoA + AMP + diphosphate. It catalyses the reaction hexanoate + ATP + CoA = hexanoyl-CoA + AMP + diphosphate. The catalysed reaction is heptanoate + ATP + CoA = heptanoyl-CoA + AMP + diphosphate. Contributes to jasmonic acid biosynthesis by initiating the beta-oxidative chain shortening of its precursors. Acts as a carboxylate--CoA ligase that can use preferentially p-coumarate, ferulate and caffeate as substrates and, with a lower efficiency, (E)-cinnamate and 4-hydroxybenzoate as substrates. Involved in the biosynthesis of ubiquinone from phenylalanine by activating the propyl side chain of 4-coumarate, and possibly trans-cinnamate and 4-hydroxybenzoate, for subsequent beta-oxidative shortening and the formation of the benzenoid moiety of ubiquinone. Follows a two-step reaction mechanism, wherein the carboxylate substrate first undergoes adenylation by ATP, followed by a thioesterification in the presence of CoA to yield the final CoA thioester. In Arabidopsis thaliana (Mouse-ear cress), this protein is 4-coumarate--CoA ligase-like 6.